An 89-amino-acid chain; its full sequence is Large ribosomal subunit protein bL28 (89 aa).

This sequence belongs to the bacterial ribosomal protein bL28 family.

This is Large ribosomal subunit protein bL28 from Chlamydia caviae (strain ATCC VR-813 / DSM 19441 / 03DC25 / GPIC) (Chlamydophila caviae).